A 210-amino-acid polypeptide reads, in one-letter code: MKNPVETAMNLVPMVVEQTNRGERAYDIFSRLLKERIIFITGPVEDGMATLVCAQLLFLEAENPKKEIALYINSPGGVVTSGMAIYDTMQFIQPPVSTLCIGQAASMGSLLLCAGHKDMRFATPNARVMVHQPSGGFQGQASDIERHAQDIIKLKRRLNEIYVKHTGQDYDTIERTLDRDHFMTADEAQAFGLVDRVISEREAIEAPRTS.

S106 (nucleophile) is an active-site residue. Residue H131 is part of the active site.

Belongs to the peptidase S14 family. Fourteen ClpP subunits assemble into 2 heptameric rings which stack back to back to give a disk-like structure with a central cavity, resembling the structure of eukaryotic proteasomes.

Its subcellular location is the cytoplasm. The catalysed reaction is Hydrolysis of proteins to small peptides in the presence of ATP and magnesium. alpha-casein is the usual test substrate. In the absence of ATP, only oligopeptides shorter than five residues are hydrolyzed (such as succinyl-Leu-Tyr-|-NHMec, and Leu-Tyr-Leu-|-Tyr-Trp, in which cleavage of the -Tyr-|-Leu- and -Tyr-|-Trp bonds also occurs).. Cleaves peptides in various proteins in a process that requires ATP hydrolysis. Has a chymotrypsin-like activity. Plays a major role in the degradation of misfolded proteins. This Chelativorans sp. (strain BNC1) protein is ATP-dependent Clp protease proteolytic subunit 1.